A 176-amino-acid chain; its full sequence is ATP-dependent protease subunit HslV (176 aa).

Thr-2 is an active-site residue. Na(+)-binding residues include Gly-157, Cys-160, and Thr-163.

Belongs to the peptidase T1B family. HslV subfamily. A double ring-shaped homohexamer of HslV is capped on each side by a ring-shaped HslU homohexamer. The assembly of the HslU/HslV complex is dependent on binding of ATP.

The protein localises to the cytoplasm. The enzyme catalyses ATP-dependent cleavage of peptide bonds with broad specificity.. Its activity is regulated as follows. Allosterically activated by HslU binding. Its function is as follows. Protease subunit of a proteasome-like degradation complex believed to be a general protein degrading machinery. The sequence is that of ATP-dependent protease subunit HslV from Marinobacter nauticus (strain ATCC 700491 / DSM 11845 / VT8) (Marinobacter aquaeolei).